Consider the following 718-residue polypeptide: Serine/threonine-protein kinase PAK 5 (718 aa).

Disordered regions lie at residues 1 to 29 (MFGK…DPQE), 96 to 119 (RSNS…IQGH), 226 to 245 (SPLD…TSRC), 264 to 296 (YDRR…QEPM), and 339 to 371 (VFSP…SSSH). The region spanning 11–24 (ISGPSNFEHRVHTG) is the CRIB domain. A linker region spans residues 25–447 (FDPQEQKFTG…VVSPGDPREY (423 aa)). The residue at position 104 (Ser-104) is a Phosphoserine. Thr-107 bears the Phosphothreonine mark. Positions 226-244 (SPLDYSFQLTPSRTAGTSR) are enriched in polar residues. The span at 359 to 371 (QSQSKVGYSSSSH) shows a compositional bias: low complexity. A Protein kinase domain is found at 448 to 699 (LDNFIKIGEG…AQELLGHPFL (252 aa)). ATP contacts are provided by residues 454–462 (IGEGSTGIV) and Lys-477. The Proton acceptor role is filled by Asp-567.

The protein belongs to the protein kinase superfamily. STE Ser/Thr protein kinase family. STE20 subfamily. In terms of assembly, interacts tightly with GTP-bound but not GDP-bound CDC42/p21 and RAC1. Interacts with MARK2, leading to inhibit MARK2 independently of kinase activity. Interacts with RHOD and RHOH. In terms of processing, autophosphorylated when activated by CDC42/p21.

It localises to the mitochondrion. Its subcellular location is the cytoplasm. The protein localises to the nucleus. The catalysed reaction is L-seryl-[protein] + ATP = O-phospho-L-seryl-[protein] + ADP + H(+). The enzyme catalyses L-threonyl-[protein] + ATP = O-phospho-L-threonyl-[protein] + ADP + H(+). Its function is as follows. Serine/threonine protein kinase that plays a role in a variety of different signaling pathways including cytoskeleton regulation, cell migration, proliferation or cell survival. Activation by various effectors including growth factor receptors or active CDC42 and RAC1 results in a conformational change and a subsequent autophosphorylation on several serine and/or threonine residues. Phosphorylates the proto-oncogene RAF and stimulates its kinase activity. Promotes cell survival by phosphorylating the BCL2 antagonist of cell death BAD. Phosphorylates CTNND1, probably to regulate cytoskeletal organization and cell morphology. Keeps microtubules stable through MARK2 inhibition and destabilizes the F-actin network leading to the disappearance of stress fibers and focal adhesions. The sequence is that of Serine/threonine-protein kinase PAK 5 (Pak5) from Rattus norvegicus (Rat).